The chain runs to 320 residues: Probable protein adenylyltransferase aq_aa38 (320 aa).

The 131-residue stretch at 76-206 (VSEALILWIY…AIVVVEKLSR (131 aa)) folds into the Fido domain. ATP-binding positions include 100–101 (KS), 157–159 (GNG), and arginine 163.

The protein belongs to the fic family.

The enzyme catalyses L-tyrosyl-[protein] + ATP = O-(5'-adenylyl)-L-tyrosyl-[protein] + diphosphate. It carries out the reaction L-threonyl-[protein] + ATP = 3-O-(5'-adenylyl)-L-threonyl-[protein] + diphosphate. In terms of biological role, probable adenylyltransferase that mediates the addition of adenosine 5'-monophosphate (AMP) to specific residues of target proteins. This chain is Probable protein adenylyltransferase aq_aa38, found in Aquifex aeolicus (strain VF5).